The primary structure comprises 375 residues: Probable RNA 3'-terminal phosphate cyclase-like protein (375 aa).

It belongs to the RNA 3'-terminal cyclase family. Type 2 subfamily.

Its subcellular location is the nucleus. The protein resides in the nucleolus. Its function is as follows. Does not have cyclase activity. Plays a role in 40S-ribosomal-subunit biogenesis in the early pre-rRNA processing steps at sites A0, A1 and A2 that are required for proper maturation of the 18S RNA. This is Probable RNA 3'-terminal phosphate cyclase-like protein from Arabidopsis thaliana (Mouse-ear cress).